The sequence spans 176 residues: Cytochrome b561 homolog 1 (176 aa).

At 1–7 the chain is on the cytoplasmic side; it reads MNRFSKT. A helical transmembrane segment spans residues 8–28; that stretch reads QIYLHWITLLFVAITYAAMEL. Residue His-12 participates in heme b binding. The Periplasmic portion of the chain corresponds to 29 to 45; sequence RGWFPKGSSTYLLMRET. His-46 contacts heme b. The helical transmembrane segment at 46–63 threads the bilayer; the sequence is HYNAGIFVWVLMFSRLII. The Cytoplasmic segment spans residues 64-85; it reads KHRYSDPSIVPPPPAWQMKAAS. A helical transmembrane segment spans residues 86–106; that stretch reads LMHIMLYITFLALPLLGIALM. At 107–141 the chain is on the periplasmic side; it reads AYSGKSWSFLGFNVSPFVTPNSEIKALIKNIHETW. Heme b-binding residues include His-138 and His-152. The helical transmembrane segment at 142 to 162 threads the bilayer; sequence ANIGYFLIAAHAGAALFHHYI. Residues 163-176 lie on the Cytoplasmic side of the membrane; the sequence is QKDNTLLRMMPRRK.

It belongs to the cytochrome b561 family. Heme b is required as a cofactor.

The protein localises to the cell inner membrane. The chain is Cytochrome b561 homolog 1 (yodB) from Escherichia coli (strain K12).